The sequence spans 147 residues: Hemoglobin subunit beta-2 (147 aa).

N-acetylvaline is present on Val2. One can recognise a Globin domain in the interval 3–147 (HLTDAEKSAV…VATALAHKYH (145 aa)). Lys18 bears the N6-succinyllysine mark. Position 42 is a phosphotyrosine (Tyr42). Ser45, Ser51, and Ser53 each carry phosphoserine. Lys60 carries the post-translational modification N6-succinyllysine. Heme b-binding residues include His64 and His93. At Arg105 the chain carries Asymmetric dimethylarginine. Thr124 is subject to Phosphothreonine.

Belongs to the globin family. Heterotetramer of two alpha chains and two beta chains. Red blood cells.

Its function is as follows. Involved in oxygen transport from the lung to the various peripheral tissues. The polypeptide is Hemoglobin subunit beta-2 (Hbb-b2) (Mus musculus (Mouse)).